A 188-amino-acid chain; its full sequence is Elongation factor P (188 aa).

Belongs to the elongation factor P family.

The protein localises to the cytoplasm. It functions in the pathway protein biosynthesis; polypeptide chain elongation. Functionally, involved in peptide bond synthesis. Stimulates efficient translation and peptide-bond synthesis on native or reconstituted 70S ribosomes in vitro. Probably functions indirectly by altering the affinity of the ribosome for aminoacyl-tRNA, thus increasing their reactivity as acceptors for peptidyl transferase. In Bacteroides thetaiotaomicron (strain ATCC 29148 / DSM 2079 / JCM 5827 / CCUG 10774 / NCTC 10582 / VPI-5482 / E50), this protein is Elongation factor P.